The sequence spans 229 residues: Adenine nucleotide translocase lysine N-methyltransferase (229 aa).

The N-terminal sequence (NTS) stretch occupies residues 1-22 (MDQDDPAEALTELREKRLGLLE). The helical transmembrane segment at 20-42 (LLEIVQAAAGSGLAVYTIWALLL) threads the bilayer. Residues 43 to 77 (QPGFRRVPLRLQVPYVGASARQVENVLSLLRGRPG) form a methyltransferase (MTase) region. A pre-methyltransferase (preMT) region spans residues 43–77 (QPGFRRVPLRLQVPYVGASARQVENVLSLLRGRPG).

The protein belongs to the ANT/ATPSC lysine N-methyltransferase family.

It is found in the mitochondrion membrane. The catalysed reaction is L-lysyl-[protein] + 3 S-adenosyl-L-methionine = N(6),N(6),N(6)-trimethyl-L-lysyl-[protein] + 3 S-adenosyl-L-homocysteine + 3 H(+). Mitochondrial protein-lysine N-methyltransferase that trimethylates adenine nucleotide translocases ANT2/SLC25A5 and ANT3/SLC25A6, thereby regulating mitochondrial respiration. Probably also trimethylates ANT1/SLC25A4. The protein is Adenine nucleotide translocase lysine N-methyltransferase of Mus musculus (Mouse).